The primary structure comprises 642 residues: Threonine--tRNA ligase (642 aa).

Positions 1 to 61 constitute a TGS domain; the sequence is MPVITLPDGS…ENDATLSIIT (61 aa). The tract at residues 243–534 is catalytic; that stretch reads DHRKIGKQLD…LTEEFAGFFP (292 aa). The Zn(2+) site is built by Cys-334, His-385, and His-511.

This sequence belongs to the class-II aminoacyl-tRNA synthetase family. Homodimer. It depends on Zn(2+) as a cofactor.

The protein localises to the cytoplasm. It catalyses the reaction tRNA(Thr) + L-threonine + ATP = L-threonyl-tRNA(Thr) + AMP + diphosphate + H(+). In terms of biological role, catalyzes the attachment of threonine to tRNA(Thr) in a two-step reaction: L-threonine is first activated by ATP to form Thr-AMP and then transferred to the acceptor end of tRNA(Thr). Also edits incorrectly charged L-seryl-tRNA(Thr). This chain is Threonine--tRNA ligase, found in Salmonella heidelberg (strain SL476).